A 117-amino-acid chain; its full sequence is uncharacterized protein (117 aa).

The helical transmembrane segment at 76–96 (FIMSSGCFLIASLSCVGLTVF) threads the bilayer.

It localises to the membrane. This is an uncharacterized protein from Saccharomyces cerevisiae (strain ATCC 204508 / S288c) (Baker's yeast).